We begin with the raw amino-acid sequence, 181 residues long: MYKSYKKRWYVLQAFSGFEGRIAQSIREHVKLKKMEKLFGEVMVPSEEVIEIKAGQRKKSEYKFFPGYVLIQMIMNESSWHLVRSIPRVLGFIGGTPDRPLPITDQEVNTIINKLKQVGDKPRPKTLFEPGETVRVNDGPFSDFNGIVEEVDYEKNRLKVSVSIFGRSTPVELDFSQVKKN.

Positions 130–158 (PGETVRVNDGPFSDFNGIVEEVDYEKNRL) constitute a KOW domain.

The protein belongs to the NusG family. As to quaternary structure, monomer. Interacts with the transcription termination factor Rho and with RNA polymerase.

Functionally, participates in transcription elongation, termination and antitermination. In the absence of Rho, increases the rate of transcription elongation by the RNA polymerase (RNAP), probably by partially suppressing pausing. In the presence of Rho, modulates most Rho-dependent termination events by interacting with the RNAP to render the complex more susceptible to the termination activity of Rho. May be required to overcome a kinetic limitation of Rho to function at certain terminators. Also involved in ribosomal RNA transcriptional antitermination. This is Transcription termination/antitermination protein NusG from Buchnera aphidicola subsp. Baizongia pistaciae (strain Bp).